Consider the following 400-residue polypeptide: Snake venom metalloproteinase H3 (400 aa).

Positions 1–6 (FPYQGS) are cleaved as a signal peptide. Positions 7 to 176 (SIILESGNVN…KKASQLIVST (170 aa)) are excised as a propeptide. Residues 180–377 (KYMEIVIVVD…ENPPCILNKP (198 aa)) form the Peptidase M12B domain. Glu-183 and Asp-267 together coordinate Ca(2+). 3 disulfides stabilise this stretch: Cys-291/Cys-372, Cys-331/Cys-356, and Cys-333/Cys-339. His-316 provides a ligand contact to Zn(2+). Glu-317 is an active-site residue. 2 residues coordinate Zn(2+): His-320 and His-326. 7 residues coordinate Ca(2+): Cys-372, Asn-375, Val-387, Asn-390, Leu-392, Glu-394, and Asp-400. Residues 378–400 (LRTDTVSTPVSGNELLEAGKDYD) constitute a propeptide that is removed on maturation.

Belongs to the venom metalloproteinase (M12B) family. P-I subfamily. As to quaternary structure, monomer. It depends on Zn(2+) as a cofactor. In terms of tissue distribution, expressed by the venom gland.

It is found in the secreted. Snake venom metalloproteinase that impairs hemostasis in the envenomed animal. The polypeptide is Snake venom metalloproteinase H3 (Deinagkistrodon acutus (Hundred-pace snake)).